A 289-amino-acid chain; its full sequence is MSRPTKADWADDEEFDDPSALPPQQITTNKDGTKTVVSYRFNDEGKKVKVTRRIKTTVVREHVNPQVAERRTWAKFGLEKGHAAGPSFDTTSVGENIVFRPSVNWKAQAAEAEKNGGEKGSIKDQLKDKKVKCRICSGEHFTARCPFKDTMAPVDEPGAGGAEGGAAAGEDAAGGLGAGGGSYVPPHLRKGAAGGGERMAGKYEKDDLATLRVTNVSELAEEQELRDLFERFGRVTRVFLARDRETQRAKGFAFISFADRSDAARACDKMDGFGYRHLILRVEFAKRAT.

Positions 1 to 33 are disordered; sequence MSRPTKADWADDEEFDDPSALPPQQITTNKDGT. Residues 209-287 form the RRM domain; that stretch reads ATLRVTNVSE…LILRVEFAKR (79 aa).

The protein belongs to the eIF-3 subunit G family. Component of the eukaryotic translation initiation factor 3 (eIF-3) complex.

It is found in the cytoplasm. In terms of biological role, RNA-binding component of the eukaryotic translation initiation factor 3 (eIF-3) complex, which is involved in protein synthesis of a specialized repertoire of mRNAs and, together with other initiation factors, stimulates binding of mRNA and methionyl-tRNAi to the 40S ribosome. The eIF-3 complex specifically targets and initiates translation of a subset of mRNAs involved in cell proliferation. This subunit can bind 18S rRNA. The chain is Eukaryotic translation initiation factor 3 subunit G (tif35) from Emericella nidulans (strain FGSC A4 / ATCC 38163 / CBS 112.46 / NRRL 194 / M139) (Aspergillus nidulans).